Reading from the N-terminus, the 83-residue chain is MKKVLALVVAAAMGLSSAAFAAETATPAKTAAPAKTTQTTQHHKKQHKKTVEQKAQAAKKHQKKDGKKAPAKSTSKTTSQPAA.

Positions 1–21 are cleaved as a signal peptide; sequence MKKVLALVVAAAMGLSSAAFA. Residues 22-40 show a composition bias toward low complexity; sequence AETATPAKTAAPAKTTQTT. Positions 22–56 are excised as a propeptide; that stretch reads AETATPAKTAAPAKTTQTTQHHKKQHKKTVEQKAQ. A disordered region spans residues 22–83; the sequence is AETATPAKTA…TSKTTSQPAA (62 aa). The span at 57–70 shows a compositional bias: basic residues; the sequence is AAKKHQKKDGKKAP. Over residues 71–83 the composition is skewed to low complexity; sequence AKSTSKTTSQPAA.

It belongs to the Asr family. Proteolytic processing gives rise to the active protein.

The protein localises to the periplasm. In terms of biological role, required for growth and/or survival at acidic conditions. This chain is Acid shock protein (asr), found in Salmonella typhi.